We begin with the raw amino-acid sequence, 1184 residues long: Cartilage intermediate layer protein 1 (1184 aa).

An N-terminal signal peptide occupies residues 1-21; that stretch reads MVGTKAWVFSFLVLEVTSVLG. N-linked (GlcNAc...) asparagine glycosylation is found at N129 and N132. One can recognise a TSP type-1 domain in the interval 149–201; the sequence is ERIWSPWSPWSKCSAACGQTGVQTRTRICLAEMVSLCSEASEEGQHCMGQDCT. Intrachain disulfides connect C161–C195, C165–C200, C177–C185, and C330–C376. Positions 309–395 constitute an Ig-like C2-type domain; the sequence is PYMVMNPETK…KSKVAQLIVI (87 aa). 6 N-linked (GlcNAc...) asparagine glycosylation sites follow: N346, N420, N550, N631, N1000, and N1056. The disordered stretch occupies residues 1136 to 1170; that stretch reads TPAQSPAAGTVQGRVPSRRQQRASRGGQRQGGVVA. Residues 1158 to 1170 are compositionally biased toward low complexity; that stretch reads ASRGGQRQGGVVA.

As to quaternary structure, monomer. Interacts with TGFB1. In terms of processing, cleaved into 2 chains possibly by a furin-like protease upon or preceding secretion. Specifically expressed in cartilage. Localizes in the intermediates layer of articular cartilage but neither in the superficial nor in the deepest regions. Specifically and highly expressed in intervertebral disk tissue. Expression increases with aging in hip articular cartilage. Overexpressed in articular hyaline cartilage from patients with calcium pyrophosphate dihydrate crystal deposition disease (CPPD). Expression in intervertebral disk tissue from individuals with lumbar disk disease increases as disk degeneration progresses.

It is found in the secreted. Its subcellular location is the extracellular space. It localises to the extracellular matrix. In terms of biological role, probably plays a role in cartilage scaffolding. May act by antagonizing TGF-beta1 (TGFB1) and IGF1 functions. Has the ability to suppress IGF1-induced proliferation and sulfated proteoglycan synthesis, and inhibits ligand-induced IGF1R autophosphorylation. May inhibit TGFB1-mediated induction of cartilage matrix genes via its interaction with TGFB1. Overexpression may lead to impair chondrocyte growth and matrix repair and indirectly promote inorganic pyrophosphate (PPi) supersaturation in aging and osteoarthritis cartilage. The protein is Cartilage intermediate layer protein 1 (CILP) of Homo sapiens (Human).